Consider the following 209-residue polypeptide: Redox-sensing transcriptional repressor Rex (209 aa).

The H-T-H motif DNA-binding region spans V16–F55. G90–G95 contributes to the NAD(+) binding site.

It belongs to the transcriptional regulatory Rex family. Homodimer.

It is found in the cytoplasm. Functionally, modulates transcription in response to changes in cellular NADH/NAD(+) redox state. The chain is Redox-sensing transcriptional repressor Rex from Maridesulfovibrio salexigens (strain ATCC 14822 / DSM 2638 / NCIMB 8403 / VKM B-1763) (Desulfovibrio salexigens).